Reading from the N-terminus, the 352-residue chain is Putative formin-like protein 15b (352 aa).

The FH2 domain maps to 1–350 (MTLFNFIKLF…KDAKEAEMEK (350 aa)).

This sequence belongs to the formin-like family. Class-II subfamily.

The chain is Putative formin-like protein 15b (FH15B) from Arabidopsis thaliana (Mouse-ear cress).